A 386-amino-acid chain; its full sequence is Histidinol-phosphate aminotransferase (386 aa).

Lys-240 bears the N6-(pyridoxal phosphate)lysine mark.

It belongs to the class-II pyridoxal-phosphate-dependent aminotransferase family. Histidinol-phosphate aminotransferase subfamily. As to quaternary structure, homodimer. It depends on pyridoxal 5'-phosphate as a cofactor.

It carries out the reaction L-histidinol phosphate + 2-oxoglutarate = 3-(imidazol-4-yl)-2-oxopropyl phosphate + L-glutamate. The protein operates within amino-acid biosynthesis; L-histidine biosynthesis; L-histidine from 5-phospho-alpha-D-ribose 1-diphosphate: step 7/9. The sequence is that of Histidinol-phosphate aminotransferase from Bifidobacterium longum (strain NCC 2705).